A 139-amino-acid polypeptide reads, in one-letter code: D-ribose pyranase (139 aa).

Residue H20 is the Proton donor of the active site. Substrate contacts are provided by residues D28, H106, and 128–130 (YAN).

This sequence belongs to the RbsD / FucU family. RbsD subfamily. In terms of assembly, homodecamer.

The protein resides in the cytoplasm. It carries out the reaction beta-D-ribopyranose = beta-D-ribofuranose. The protein operates within carbohydrate metabolism; D-ribose degradation; D-ribose 5-phosphate from beta-D-ribopyranose: step 1/2. Its function is as follows. Catalyzes the interconversion of beta-pyran and beta-furan forms of D-ribose. The protein is D-ribose pyranase of Vibrio vulnificus (strain CMCP6).